A 303-amino-acid chain; its full sequence is B1 kinase (303 aa).

It belongs to the protein kinase superfamily. Ser/Thr protein kinase family. Poxviruses subfamily. In terms of assembly, interacts with host JIP1; this interaction increases the amount of MAPK bound to JIP1 and subsequently increases the activity of transcription factors, such as JUN, that respond to these complexes. Interacts with protein OPG198; this interaction inhibits the repressive activity of OPG198 pseudokinase on viral replication factory formation. It depends on Mg(2+) as a cofactor. Autophosphorylated.

It is found in the virion. Its subcellular location is the host cytoplasm. The enzyme catalyses L-seryl-[protein] + ATP = O-phospho-L-seryl-[protein] + ADP + H(+). It carries out the reaction L-threonyl-[protein] + ATP = O-phospho-L-threonyl-[protein] + ADP + H(+). Essential serine/threonine-protein kinase that plays different role in the viral life cycle. Phosphorylates the host small ribosomal protein RACK1 thereby customizing the ribosomes to a state optimal for viral mRNAs (which contain poly-A leaders) but not for host mRNAs. Facilitates viral DNA replication by inhibiting host BANF1, a cellular host defense responsive to foreign DNA. Phosphorylates host BANF1 on serine and threonine residues; this leads to BANF1 relocalization to the cytoplasm, loss of dimerization and impaired DNA binding activity. Indeed, BANF1 activity depends on its DNA-binding property which is blocked by VPK1-mediated phosphorylation. Required for viral intermediate genes expression, probably by inhibiting host BANF1. Modulates cellular responses via host JUN by two different mechanisms, either by direct phosphorylation or by modulation of upstream JIP1-MAPK complexes. Seems to participate in the accumulation/processing of late proteins and thus in virion maturation. In addition, inhibits B12 repressive activity on viral DNA replication via a phosphorylation-dependent mechanism. The chain is B1 kinase (OPG187) from Cynomys gunnisoni (Gunnison's prairie dog).